A 576-amino-acid polypeptide reads, in one-letter code: uncharacterized protein (576 aa).

The Cytoplasmic segment spans residues 1–8 (MSLSLGAA). The chain crosses the membrane as a helical span at residues 9–29 (IYIALKPIFKIYTIMLVGYLV). Topologically, residues 30–45 (AKFDIVSMENAKGISN) are extracellular. Residues 46-66 (MVVNAILPCLTFNKIVSNISW) traverse the membrane as a helical segment. Over 67–71 (RDIKE) the chain is Cytoplasmic. A helical membrane pass occupies residues 72–92 (IGVIILSAFILFVLGATGALF). The Extracellular portion of the chain corresponds to 93–103 (TTFATTVPKKF). Residues 104 to 124 (FWGLIFAGFFPNISDLPIAYI) traverse the membrane as a helical segment. The Cytoplasmic segment spans residues 125–141 (QSMGNGSIFTAEEADKG). Residues 142–162 (VAYSCIFLFIQSFLMMNFGMW) form a helical membrane-spanning segment. Residues 163 to 400 (RVVGLDFRDT…FIINCLRPAS (238 aa)) lie on the Extracellular side of the membrane. A helical transmembrane segment spans residues 401-421 (LGAILGIICALIPWVKACFVT). At 422 to 437 (TYVHVHKAPDGEPVLN) the chain is on the cytoplasmic side. The chain crosses the membrane as a helical span at residues 438-458 (FLMDFTEYIGNACVPLGLLLL). Topologically, residues 459 to 476 (GGTLARLEIKSLPPGFIK) are extracellular. Residues 477-497 (SALLMTCFRLIVIPIIGVLWV) traverse the membrane as a helical segment. Topologically, residues 498–512 (NKLYSIDWLDTGIGK) are cytoplasmic. The helical transmembrane segment at 513 to 533 (FDMILTWSMPSATAQVYFTAF) threads the bilayer. The Extracellular segment spans residues 534–545 (YTPACGDHIQMN). The helical transmembrane segment at 546 to 566 (CLSVLFVMQYAILFITVAFVV) threads the bilayer. The Cytoplasmic portion of the chain corresponds to 567–576 (TYTLKVDLKV).

Belongs to the auxin efflux carrier (TC 2.A.69) family.

It is found in the membrane. This is an uncharacterized protein from Saccharomyces cerevisiae (strain ATCC 204508 / S288c) (Baker's yeast).